A 332-amino-acid chain; its full sequence is Endonuclease 8-like 2 (332 aa).

Proline 2 functions as the Schiff-base intermediate with DNA in the catalytic mechanism. Glutamate 3 serves as the catalytic Proton donor. Lysine 50 functions as the Proton donor; for beta-elimination activity in the catalytic mechanism. N6-acetyllysine is present on lysine 50. The disordered stretch occupies residues 59–121 (DEEMGPPGSS…EDDSEYLERD (63 aa)). The residue at position 68 (serine 68) is a Phosphoserine. The span at 74–84 (PQKEVQKEGAA) shows a compositional bias: basic and acidic residues. Residues 94–104 (GQKTLDGSSRS) are compositionally biased toward polar residues. Lysine 154 is subject to N6-acetyllysine. Asparagine 231 contributes to the DNA binding site. The FPG-type zinc-finger motif lies at 284-320 (QVYQKEQCPAGHQVMKEAFGPEDGLQRLTWWCPQCQP). Residue arginine 310 is the Proton donor; for delta-elimination activity of the active site.

Belongs to the FPG family. Binds EP300. Detected in testis, skeletal muscle, heart, brain, placenta, lung, pancreas, kidney and liver.

It is found in the nucleus. It catalyses the reaction 2'-deoxyribonucleotide-(2'-deoxyribose 5'-phosphate)-2'-deoxyribonucleotide-DNA = a 3'-end 2'-deoxyribonucleotide-(2,3-dehydro-2,3-deoxyribose 5'-phosphate)-DNA + a 5'-end 5'-phospho-2'-deoxyribonucleoside-DNA + H(+). With respect to regulation, acetylation of Lys-50 leads to loss of DNA nicking activity. Acetylation of Lys-154 has no effect. In terms of biological role, involved in base excision repair of DNA damaged by oxidation or by mutagenic agents. Has DNA glycosylase activity towards 5-hydroxyuracil and other oxidized derivatives of cytosine with a preference for mismatched double-stranded DNA (DNA bubbles). Has low or no DNA glycosylase activity towards thymine glycol, 2-hydroxyadenine, hypoxanthine and 8-oxoguanine. Has AP (apurinic/apyrimidinic) lyase activity and introduces nicks in the DNA strand. Cleaves the DNA backbone by beta-delta elimination to generate a single-strand break at the site of the removed base with both 3'- and 5'-phosphates. The protein is Endonuclease 8-like 2 (NEIL2) of Homo sapiens (Human).